Reading from the N-terminus, the 158-residue chain is Phosphopantetheine adenylyltransferase (158 aa).

Thr-10 contacts substrate. ATP-binding positions include 10 to 11 (TF) and His-18. Positions 42, 74, and 88 each coordinate substrate. ATP-binding positions include 89–91 (GLR), Glu-99, and 124–130 (NSFISST).

Belongs to the bacterial CoaD family. Homohexamer. The cofactor is Mg(2+).

Its subcellular location is the cytoplasm. The catalysed reaction is (R)-4'-phosphopantetheine + ATP + H(+) = 3'-dephospho-CoA + diphosphate. The protein operates within cofactor biosynthesis; coenzyme A biosynthesis; CoA from (R)-pantothenate: step 4/5. Its function is as follows. Reversibly transfers an adenylyl group from ATP to 4'-phosphopantetheine, yielding dephospho-CoA (dPCoA) and pyrophosphate. In Shewanella woodyi (strain ATCC 51908 / MS32), this protein is Phosphopantetheine adenylyltransferase.